Consider the following 137-residue polypeptide: Putative protein YjhV (137 aa).

Positions 1–16 (MVGYHQTNQKTDTGKT) are enriched in polar residues. Residues 1-20 (MVGYHQTNQKTDTGKTLTRR) are disordered.

This is Putative protein YjhV (yjhV) from Escherichia coli (strain K12).